Here is a 1307-residue protein sequence, read N- to C-terminus: Rho1 guanine nucleotide exchange factor TUS1 (1307 aa).

Residues Met1–Phe10 show a composition bias toward polar residues. 3 disordered regions span residues Met1–Asn144, Pro164–Arg194, and Glu219–Gly239. A compositionally biased stretch (basic and acidic residues) spans Arg12–Glu29. The span at Asn37–Lys79 shows a compositional bias: polar residues. Low complexity predominate over residues Thr87–Thr97. A compositionally biased stretch (basic and acidic residues) spans Ser176–Arg194. Residues Gln467–Val657 enclose the DH domain. A PH domain is found at Lys715–Lys877. Positions Thr780–Thr802 are disordered. A CNH domain is found at Thr938–Lys1279.

In terms of assembly, interacts with RHO1.

Guanine nucleotide-exchange factor (GEF) for RHO1 that stimulates the exchange of RHO1 GDP-bound form into GTP-bound form. Required for signaling of cell wall defects to RHO1. The polypeptide is Rho1 guanine nucleotide exchange factor TUS1 (TUS1) (Saccharomyces cerevisiae (strain ATCC 204508 / S288c) (Baker's yeast)).